A 1141-amino-acid polypeptide reads, in one-letter code: Serine-aspartate repeat-containing protein E (1141 aa).

A signal peptide spans 1 to 52 (MINRDNKKAITKKGMISNRLNKFSIRKYTVGTASILVGTTLIFGLGNQEAKA). Positions 23–34 (FSIRKYTVGTAS) match the YSIRK-G/S signaling motif motif. The ligand binding A region stretch occupies residues 53-601 (AENTSTENAK…GDGTVKPEEK (549 aa)). The segment at 54-248 (ENTSTENAKQ…RSTKPVATAP (195 aa)) is disordered. The span at 61–75 (AKQDDATTSDNKEVV) shows a compositional bias: basic and acidic residues. Residues 77-90 (ETENNSTTENDSTN) show a composition bias toward low complexity. The segment covering 92–108 (IKKETNTDSQPEAKEES) has biased composition (basic and acidic residues). A compositionally biased stretch (low complexity) spans 109–126 (TTSSTQQQQNNVTATTET). Residues 130 to 145 (NIEKENVKPSTDKTAT) show a composition bias toward basic and acidic residues. The span at 159-207 (NYTNNDVTTKPSTSEIQTKPTTPQESTNIENSQPQPTPSKVDNQVTDAT) shows a compositional bias: polar residues. Positions 216–241 (SKEELKNNPEKLKELVRNDNNTDRST) are enriched in basic and acidic residues. CNA-B domains lie at 602-714 (LYKI…YKEP), 715-824 (KYNL…YKTP), and 825-935 (KYSL…EEDT). The segment at 929-1117 (GYFEEDTSDS…GSENNGSNNA (189 aa)) is disordered. Positions 930-1080 (YFEEDTSDSD…DSDSDSDSDS (151 aa)) are enriched in acidic residues. The LPXTG sorting signal motif lies at 1104 to 1108 (LPETG). At Thr-1107 the chain carries Pentaglycyl murein peptidoglycan amidated threonine. Residues 1108 to 1141 (GSENNGSNNATLFGGLFAALGSLLLFGRRKKQNK) constitute a propeptide, removed by sortase.

Belongs to the serine-aspartate repeat-containing protein (SDr) family. Interacts with host complement factor H/CFAH (via C-terminus). Interacts with host complement regulator C4BPA.

The protein resides in the secreted. The protein localises to the cell wall. Its function is as follows. Cell surface-associated calcium-binding protein which plays an important role in adhesion and pathogenesis. Contributes to the resistance to killing by innate immune components in blood and thus attenuates bacterial clearance by interacting with host complement factor H/CFAH and modulating its activity. Inhibits also bacterial opsonization and killing by interacting with host complement regulator C4BPA and thus inhibiting classical complement pathway activation. In Staphylococcus aureus (strain Mu50 / ATCC 700699), this protein is Serine-aspartate repeat-containing protein E (sdrE).